Here is a 91-residue protein sequence, read N- to C-terminus: Late embryogenis abundant protein 2 (91 aa).

The disordered stretch occupies residues lysine 47–threonine 72.

Belongs to the LEA type 3 family.

It localises to the cytoplasm. It is found in the nucleus. This is Late embryogenis abundant protein 2 from Arabidopsis thaliana (Mouse-ear cress).